We begin with the raw amino-acid sequence, 408 residues long: Putative transporter AmpG 2 (408 aa).

The next 12 helical transmembrane spans lie at 10–30, 49–69, 84–104, 109–129, 154–174, 177–197, 224–244, 261–281, 294–311, 315–337, 353–373, and 378–398; these read YISN…IYLL, IGLF…GPLL, YCLI…TNFN, FIPF…YDML, FRIG…IISW, VYRS…IYPL, WLII…LSIM, LGYK…GGFL, ALIY…LYFY, ITSL…SPFF, IALI…ISGY, and LGWT…YILI.

This sequence belongs to the major facilitator superfamily.

Its subcellular location is the cell inner membrane. The sequence is that of Putative transporter AmpG 2 (ampG2) from Rickettsia felis (strain ATCC VR-1525 / URRWXCal2) (Rickettsia azadi).